Consider the following 901-residue polypeptide: Protein translocase subunit SecA (901 aa).

ATP is bound by residues Q87, 105–109 (GEGKT), and D512. Zn(2+) is bound by residues C885, C887, C896, and H897.

The protein belongs to the SecA family. Monomer and homodimer. Part of the essential Sec protein translocation apparatus which comprises SecA, SecYEG and auxiliary proteins SecDF-YajC and YidC. Zn(2+) serves as cofactor.

It localises to the cell inner membrane. The protein resides in the cytoplasm. It carries out the reaction ATP + H2O + cellular proteinSide 1 = ADP + phosphate + cellular proteinSide 2.. Its function is as follows. Part of the Sec protein translocase complex. Interacts with the SecYEG preprotein conducting channel. Has a central role in coupling the hydrolysis of ATP to the transfer of proteins into and across the cell membrane, serving both as a receptor for the preprotein-SecB complex and as an ATP-driven molecular motor driving the stepwise translocation of polypeptide chains across the membrane. This chain is Protein translocase subunit SecA, found in Salmonella paratyphi A (strain ATCC 9150 / SARB42).